The following is a 273-amino-acid chain: Large ribosomal subunit protein uL2 (273 aa).

The segment at 224–264 (AMNPVDHPHGGGEGRNFGKHPVTPWGIQTKGKKTRKNKRTD) is disordered. The span at 253 to 264 (KGKKTRKNKRTD) shows a compositional bias: basic residues.

This sequence belongs to the universal ribosomal protein uL2 family. Part of the 50S ribosomal subunit. Forms a bridge to the 30S subunit in the 70S ribosome.

Functionally, one of the primary rRNA binding proteins. Required for association of the 30S and 50S subunits to form the 70S ribosome, for tRNA binding and peptide bond formation. It has been suggested to have peptidyltransferase activity; this is somewhat controversial. Makes several contacts with the 16S rRNA in the 70S ribosome. The chain is Large ribosomal subunit protein uL2 from Buchnera aphidicola subsp. Acyrthosiphon pisum (strain 5A).